The primary structure comprises 207 residues: MVHYKLTYFNARGLAEISRQLFHMAGVEFEDERINEEKFSQLKPTFPSGQVPILCIDGAQFSQSTAIARYLARKFGFVGQTAEEELQADEVVDTFKDFIESFRKFVIAVLSGESEEILKNIREEVIKPAVKTYTAYLKAILEKSSSGYLVGNELTWADLVIADNLTTLINAELLDIENDKLLKEFREKIIETPKLKEWLAKRPETRF.

One can recognise a GST N-terminal domain in the interval 2-79 (VHYKLTYFNA…YLARKFGFVG (78 aa)). Glutathione contacts are provided by residues Tyr8, Lys43, 49–51 (GQV), and 63–64 (QS). The region spanning 81-207 (TAEEELQADE…WLAKRPETRF (127 aa)) is the GST C-terminal domain.

The protein belongs to the GST superfamily. Sigma family.

It carries out the reaction RX + glutathione = an S-substituted glutathione + a halide anion + H(+). Its function is as follows. Conjugation of reduced glutathione to a wide number of exogenous and endogenous hydrophobic electrophiles. The polypeptide is Glutathione S-transferase 3 (gst-3) (Caenorhabditis elegans).